Consider the following 281-residue polypeptide: Shikimate dehydrogenase (NADP(+)) (281 aa).

Residues 19-21 and Thr66 contribute to the shikimate site; that span reads SFS. Lys70 (proton acceptor) is an active-site residue. Positions 91 and 104 each coordinate shikimate. NADP(+) contacts are provided by residues 127 to 131 and Ile223; that span reads GAGGA. A shikimate-binding site is contributed by Tyr225. Gly246 serves as a coordination point for NADP(+).

Belongs to the shikimate dehydrogenase family. Homodimer.

It carries out the reaction shikimate + NADP(+) = 3-dehydroshikimate + NADPH + H(+). It functions in the pathway metabolic intermediate biosynthesis; chorismate biosynthesis; chorismate from D-erythrose 4-phosphate and phosphoenolpyruvate: step 4/7. Functionally, involved in the biosynthesis of the chorismate, which leads to the biosynthesis of aromatic amino acids. Catalyzes the reversible NADPH linked reduction of 3-dehydroshikimate (DHSA) to yield shikimate (SA). This chain is Shikimate dehydrogenase (NADP(+)), found in Methanobrevibacter smithii (strain ATCC 35061 / DSM 861 / OCM 144 / PS).